A 122-amino-acid chain; its full sequence is MICOS complex subunit MIC13 homolog QIL1 (122 aa).

Residues 9–25 form a helical membrane-spanning segment; sequence GGLVAATVYYTQKVGIW.

The protein belongs to the MICOS complex subunit Mic13 family. Component of the mitochondrial contact site and cristae organizing system (MICOS) complex.

Its subcellular location is the mitochondrion inner membrane. Component of the MICOS complex, a large protein complex of the mitochondrial inner membrane that plays crucial roles in the maintenance of crista junctions, inner membrane architecture, and formation of contact sites to the outer membrane. This chain is MICOS complex subunit MIC13 homolog QIL1, found in Drosophila melanogaster (Fruit fly).